The following is an 89-amino-acid chain: Protein YxiC (89 aa).

This Bacillus subtilis (strain 168) protein is Protein YxiC (yxiC).